The following is a 610-amino-acid chain: POU domain, class 6, transcription factor 1 (610 aa).

A disordered region spans residues 55–87 (SSAGAAESGGDEEGSGQSLEATEEAQLDGPVTT). Positions 448-522 (EEAINLEEIR…VLERWLAEAE (75 aa)) constitute a POU-specific domain. Positions 543 to 602 (KRKRRTSFTPQAIEVLNTYFEKNSLPTGQEITEIAKELNYDREVVRVWFCNRRQTLKNTS) form a DNA-binding region, homeobox.

The protein belongs to the POU transcription factor family. Class-6 subfamily. Ubiquitously expressed during embryogenesis.

It localises to the nucleus. In terms of biological role, transcription factor that binds with high affinity to the motif 5'-TAATGARAT-3'. This is POU domain, class 6, transcription factor 1 (pou6f1) from Danio rerio (Zebrafish).